The following is a 101-amino-acid chain: NAD(P)H-quinone oxidoreductase subunit 4L, chloroplastic (101 aa).

Transmembrane regions (helical) follow at residues 2 to 22, 32 to 52, and 61 to 81; these read MFEL…YGLI, ICLE…SDLF, and IFAI…LSIL.

Belongs to the complex I subunit 4L family. As to quaternary structure, NDH is composed of at least 16 different subunits, 5 of which are encoded in the nucleus.

It is found in the plastid. Its subcellular location is the chloroplast thylakoid membrane. It catalyses the reaction a plastoquinone + NADH + (n+1) H(+)(in) = a plastoquinol + NAD(+) + n H(+)(out). It carries out the reaction a plastoquinone + NADPH + (n+1) H(+)(in) = a plastoquinol + NADP(+) + n H(+)(out). Functionally, NDH shuttles electrons from NAD(P)H:plastoquinone, via FMN and iron-sulfur (Fe-S) centers, to quinones in the photosynthetic chain and possibly in a chloroplast respiratory chain. The immediate electron acceptor for the enzyme in this species is believed to be plastoquinone. Couples the redox reaction to proton translocation, and thus conserves the redox energy in a proton gradient. The protein is NAD(P)H-quinone oxidoreductase subunit 4L, chloroplastic of Lolium perenne (Perennial ryegrass).